The sequence spans 321 residues: Iron(3+)-hydroxamate-binding protein YxeB (321 aa).

An N-terminal signal peptide occupies residues 1-20; sequence MKKNILLVGMLVLLLMFVSA. C21 carries N-palmitoyl cysteine lipidation. C21 carries the S-diacylglycerol cysteine lipid modification. Over residues 24-33 the composition is skewed to low complexity; the sequence is TASKGSSSDS. The disordered stretch occupies residues 24–48; the sequence is TASKGSSSDSASEKTEMRTYKSPKG. The Fe/B12 periplasmic-binding domain occupies 58–316; sequence RIVTDFYAGE…IITDMLIKRA (259 aa).

Belongs to the bacterial solute-binding protein 8 family. As to quaternary structure, the complex is composed of an ATP-binding protein (FhuC), two transmembrane proteins (FhuB and FhuG) and a solute-binding protein (FhuD or YxeB).

The protein localises to the cell membrane. Its subcellular location is the membrane raft. Its function is as follows. Part of the ABC transporter complex FhuCBGD involved in iron(3+)-hydroxamate import. Binds the iron(3+)-hydroxamate complex and transfers it to the membrane-bound permease. Partially required for the transport of desferrioxamine. This chain is Iron(3+)-hydroxamate-binding protein YxeB (yxeB), found in Bacillus subtilis (strain 168).